The sequence spans 418 residues: MTLLALGINHKTAPVDLRERVTFSPETLDQALESLLAQPMVQGGVVLSTCNRTELYLSVEEQDNLQEALIRWLCNYHGLNEEDLRKSLYWHQDNDAVSHLMRVASGLDSLVLGEPQILGQVKKAFADSSRGHLNVSELERMFQKSFSVAKRVRTETDIGASAVSVAFAACTLARQIFESLSSVTVLLVGAGETIELVARHLREHHVRKMVIANRTRERAQALADEVGAEVIALSDIDERLKEADIIISSTASPLPIIGKGMVERALKARRNQPMLLVDIAVPRDVEPEVGKLANAYLYSVDDLQNIIQHNLAQRKAAAVQAESIVEQETSEFMAWLRAQSASETIREYRSQSEQVREELTAKALAALEQGGDAQEIMQDLARKLTNRLIHAPTKSLQQAARDGDDERLHILRNSLGLE.

Substrate contacts are provided by residues 49-52 (TCNR), serine 109, 114-116 (EPQ), and glutamine 120. Cysteine 50 (nucleophile) is an active-site residue. 189–194 (GAGETI) lines the NADP(+) pocket.

It belongs to the glutamyl-tRNA reductase family. Homodimer.

It carries out the reaction (S)-4-amino-5-oxopentanoate + tRNA(Glu) + NADP(+) = L-glutamyl-tRNA(Glu) + NADPH + H(+). It participates in porphyrin-containing compound metabolism; protoporphyrin-IX biosynthesis; 5-aminolevulinate from L-glutamyl-tRNA(Glu): step 1/2. In terms of biological role, catalyzes the NADPH-dependent reduction of glutamyl-tRNA(Glu) to glutamate 1-semialdehyde (GSA). The sequence is that of Glutamyl-tRNA reductase from Klebsiella pneumoniae (strain 342).